Consider the following 150-residue polypeptide: SsrA-binding protein (150 aa).

It belongs to the SmpB family.

Its subcellular location is the cytoplasm. In terms of biological role, required for rescue of stalled ribosomes mediated by trans-translation. Binds to transfer-messenger RNA (tmRNA), required for stable association of tmRNA with ribosomes. tmRNA and SmpB together mimic tRNA shape, replacing the anticodon stem-loop with SmpB. tmRNA is encoded by the ssrA gene; the 2 termini fold to resemble tRNA(Ala) and it encodes a 'tag peptide', a short internal open reading frame. During trans-translation Ala-aminoacylated tmRNA acts like a tRNA, entering the A-site of stalled ribosomes, displacing the stalled mRNA. The ribosome then switches to translate the ORF on the tmRNA; the nascent peptide is terminated with the 'tag peptide' encoded by the tmRNA and targeted for degradation. The ribosome is freed to recommence translation, which seems to be the essential function of trans-translation. The sequence is that of SsrA-binding protein from Borreliella burgdorferi (strain ATCC 35210 / DSM 4680 / CIP 102532 / B31) (Borrelia burgdorferi).